The sequence spans 265 residues: MDTAQKQRWAITLSYDGSRFYGWQKQADGVPTVQAALETALAQIAGEAVSTTVAGRTDTGVHATAQVVHFDTTAARPQQAWVRGVNAHLPEGIAVLHARQVAPEFHARFDAYGRHYRYLLESAPVRSPLLKNRAGWTHLKLDIGQMRQAAALLVGEQDFSSFRAAECQAKSPVKTIYRADLTQSSGLVRLDLHGNAFLHHMVRNIMGALVYVGSGRLSVEGFAALIQERSRLKAPPTFMPDGLYLTGVDYPEAYGIIRPQIPEWL.

Aspartate 58 functions as the Nucleophile in the catalytic mechanism. Tyrosine 116 is a substrate binding site.

It belongs to the tRNA pseudouridine synthase TruA family. In terms of assembly, homodimer.

The catalysed reaction is uridine(38/39/40) in tRNA = pseudouridine(38/39/40) in tRNA. Functionally, formation of pseudouridine at positions 38, 39 and 40 in the anticodon stem and loop of transfer RNAs. This chain is tRNA pseudouridine synthase A, found in Neisseria meningitidis serogroup B (strain ATCC BAA-335 / MC58).